The sequence spans 296 residues: MDPKISYFQTFIVASKTKSFSKAAKRLGITQGTVSNHISALEKYFDAQLFLRTPEGVDLTPEGKIFYERAEKILDLLNEAKLLMRAIHENPEGIIRIYASTTPGEHILPSIIKEYKSSYKNVDFEITITDSERCFKALDEGLADIAAVGYLKNKNYEYTIIGKDRLVLIVPPNHPLAEKGTAKLEDILKEDYIDREEGSGTREAFIKALNDKGYSIMDLNVVMRLGSHSAVITAVSEGYGVSVVSEIPAKKAEDAGLIKIVPVVDLDVVRYLYLVKSRRPKNPSAVKSFWEFVTKV.

The HTH lysR-type domain occupies 1–60 (MDPKISYFQTFIVASKTKSFSKAAKRLGITQGTVSNHISALEKYFDAQLFLRTPEGVDLT). A DNA-binding region (H-T-H motif) is located at residues 20–39 (FSKAAKRLGITQGTVSNHIS).

It belongs to the LysR transcriptional regulatory family.

This is an uncharacterized protein from Methanocaldococcus jannaschii (strain ATCC 43067 / DSM 2661 / JAL-1 / JCM 10045 / NBRC 100440) (Methanococcus jannaschii).